Consider the following 827-residue polypeptide: Transcription factor SOX-6 (827 aa).

The span at 1 to 10 shows a compositional bias: polar residues; that stretch reads MSSKQATSPF. A disordered region spans residues 1 to 51; sequence MSSKQATSPFACTADGEEAMTQDLTSREKEEGSDQHPASHLPLHPIMHNKP. Over residues 25-34 the composition is skewed to basic and acidic residues; sequence TSREKEEGSD. At T119 the chain carries Phosphothreonine. A coiled-coil region spans residues 184–262; that stretch reads LAEKERQLST…LLQQQIQVQG (79 aa). Disordered stretches follow at residues 334-361 and 379-470; these read QINPRLKGISDRFGRNLDPSEHGGGHSY and VSPG…PIGG. Residues 341-357 show a composition bias toward basic and acidic residues; that stretch reads GISDRFGRNLDPSEHGG. At S399 the chain carries Phosphoserine. Phosphothreonine is present on T401. Glycyl lysine isopeptide (Lys-Gly) (interchain with G-Cter in SUMO) cross-links involve residues K404 and K417. 2 stretches are compositionally biased toward polar residues: residues 421 to 431 and 439 to 461; these read TAQPLNLSSRP and SPTSPTQNLFPASKTSPVNLPNK. 2 positions are modified to phosphoserine: S439 and S442. Positions 620–688 form a DNA-binding region, HMG box; that stretch reads IKRPMNAFMV…IHLEKYPNYK (69 aa). 2 disordered regions span residues 752–772 and 786–827; these read TPSPQMTSDCSSTSASPEPSL and ASLA…VSAN. Acidic residues predominate over residues 795-808; the sequence is NGEDEMEAYDDYED.

Homodimer. Interacts with DAZAP2. May interact with CENPK. Sumoylation inhibits the transcriptional activity. In terms of tissue distribution, highly expressed in testis.

Its subcellular location is the nucleus. It is found in the cytoplasm. Transcription factor that plays a key role in several developmental processes, including neurogenesis, chondrocytes differentiation and cartilage formation. Specifically binds the 5'-AACAAT-3' DNA motif present in enhancers and super-enhancers and promotes expression of genes important for chondrogenesis. Required for overt chondrogenesis when condensed prechondrocytes differentiate into early stage chondrocytes: SOX5 and SOX6 cooperatively bind with SOX9 on active enhancers and super-enhancers associated with cartilage-specific genes, and thereby potentiate SOX9's ability to transactivate. Not involved in precartilaginous condensation, the first step in chondrogenesis, during which skeletal progenitors differentiate into prechondrocytes. Together with SOX5, required to form and maintain a pool of highly proliferating chondroblasts between epiphyses and metaphyses, to form columnar chondroblasts, delay chondrocyte prehypertrophy but promote hypertrophy, and to delay terminal differentiation of chondrocytes on contact with ossification fronts. Binds to the proximal promoter region of the myelin protein MPZ gene, and is thereby involved in the differentiation of oligodendroglia in the developing spinal tube. Binds to the gene promoter of MBP and acts as a transcriptional repressor. This chain is Transcription factor SOX-6, found in Mus musculus (Mouse).